A 157-amino-acid chain; its full sequence is Large ribosomal subunit protein uL15 (157 aa).

It belongs to the universal ribosomal protein uL15 family. As to quaternary structure, part of the 50S ribosomal subunit.

In terms of biological role, binds to the 23S rRNA. The protein is Large ribosomal subunit protein uL15 of Ehrlichia ruminantium (strain Gardel).